The chain runs to 392 residues: RNA-binding motif protein, X-linked-like-2 (392 aa).

An RRM domain is found at 8–86; the sequence is GKLFIGGLNL…KAIKVAQATK (79 aa). A compositionally biased stretch (basic and acidic residues) spans 67 to 78; sequence RDMNGKSLDGKA. The disordered stretch occupies residues 67–392; sequence RDMNGKSLDG…LERGGGRSRY (326 aa). A compositionally biased stretch (pro residues) spans 150–163; that stretch reads RGPPPRRVGPPPKR. Composition is skewed to basic and acidic residues over residues 194–229 and 238–283; these read PRRE…REPR and YTHR…REPF. The span at 319–331 shows a compositional bias: low complexity; that stretch reads YSGGRDSYSSSYG. Over residues 381–392 the composition is skewed to basic and acidic residues; that stretch reads GRLERGGGRSRY.

Expressed predominantly in spermatocytes and less in round spermatids (at protein level). Expressed in germ cells.

The protein localises to the nucleus. This is RNA-binding motif protein, X-linked-like-2 (RBMXL2) from Homo sapiens (Human).